The following is a 212-amino-acid chain: Ribonuclease HII (212 aa).

An RNase H type-2 domain is found at 7-212 (SQILGIDEAG…TIENITKSTE (206 aa)). A divalent metal cation-binding residues include Asp13, Glu14, and Asp111.

Belongs to the RNase HII family. Requires Mn(2+) as cofactor. The cofactor is Mg(2+).

It localises to the cytoplasm. The catalysed reaction is Endonucleolytic cleavage to 5'-phosphomonoester.. Its function is as follows. Endonuclease that specifically degrades the RNA of RNA-DNA hybrids. The protein is Ribonuclease HII of Methanosphaera stadtmanae (strain ATCC 43021 / DSM 3091 / JCM 11832 / MCB-3).